A 616-amino-acid chain; its full sequence is Telomeric repeat-binding factor 2-interacting protein 1 (616 aa).

One can recognise a BRCT domain in the interval 15–98 (FLDPGGQSMR…QQLDPNDYAI (84 aa)). One can recognise a Myb-like domain in the interval 112-169 (NQGSGRLGYSSEEDAAILKFIEKRQQDAKGNLVWKEMEKRHVTEHSWQSMKDRFLKHL). The segment at 174 to 518 (ADKPTKKSPI…CSHIRETPEE (345 aa)) is disordered. Residues 232–245 (PERASSPPEEPQAA) are compositionally biased toward low complexity. The segment covering 246 to 255 (GQPSQASSND) has biased composition (polar residues). 2 stretches are compositionally biased toward basic and acidic residues: residues 271 to 288 (ENPRLDEDAPDASNEHSS) and 344 to 358 (RSSRLEENPDRRDIP). Polar residues-rich tracts occupy residues 363–382 (EQSSPNKSQMTSKISTSDSG) and 397–415 (NANSSPSKTRQTNSEASTP). Residues 431–444 (EDSDVMDDSEECEN) are compositionally biased toward acidic residues. The span at 468 to 480 (REPESQAEHHEET) shows a compositional bias: basic and acidic residues. Positions 597 to 613 (SKFGEEEVTRRKSFLAT) match the Nuclear localization signal motif.

Belongs to the RAP1 family. Homodimer. Component of the shelterin complex (telosome). Interacts with terf2; the interaction is direct.

Its subcellular location is the nucleus. The protein resides in the chromosome. It is found in the telomere. Functionally, acts both as a regulator of telomere function and as a transcription regulator. Involved in the regulation of telomere length and protection as a component of the shelterin complex (telosome). Does not bind DNA directly: recruited to telomeric double-stranded 5'-TTAGGG-3' repeats via its interaction with terf2. Independently of its function in telomeres, also acts as a transcription regulator: recruited to extratelomeric 5'-TTAGGG-3' sites via its association with terf2 or other factors, and regulates gene expression. The chain is Telomeric repeat-binding factor 2-interacting protein 1 (terf2ip) from Danio rerio (Zebrafish).